A 238-amino-acid chain; its full sequence is tRNA (guanine-N(7)-)-methyltransferase (238 aa).

A compositionally biased stretch (polar residues) spans 1-12 (MTDTAENQTPND). Residues 1-20 (MTDTAENQTPNDRQAGHPRS) form a disordered region. Glutamate 70, aspartate 95, aspartate 122, and aspartate 145 together coordinate S-adenosyl-L-methionine. Residue aspartate 145 is part of the active site. Residues lysine 149, aspartate 181, and 216–219 (TKFE) each bind substrate.

It belongs to the class I-like SAM-binding methyltransferase superfamily. TrmB family.

The enzyme catalyses guanosine(46) in tRNA + S-adenosyl-L-methionine = N(7)-methylguanosine(46) in tRNA + S-adenosyl-L-homocysteine. It functions in the pathway tRNA modification; N(7)-methylguanine-tRNA biosynthesis. Catalyzes the formation of N(7)-methylguanine at position 46 (m7G46) in tRNA. The sequence is that of tRNA (guanine-N(7)-)-methyltransferase from Neisseria gonorrhoeae (strain NCCP11945).